Consider the following 195-residue polypeptide: uncharacterized protein (195 aa).

The N-terminal stretch at 1–20 is a signal peptide; sequence MLKFRLILTVLTVLLITVNG. The interval 26 to 195 is disordered; that stretch reads IENKSSTSSS…LHNQYPPQQN (170 aa). N-linked (GlcNAc...) asparagine glycosylation is present at Asn28. 2 stretches are compositionally biased toward low complexity: residues 29–43 and 74–104; these read KSST…SKPS and QSKT…GGNQ. Polar residues-rich tracts occupy residues 112-123 and 151-176; these read DPYQTGSYQGPY and PKNT…NNGP.

In terms of tissue distribution, component of the acid-soluble organic matrix of calcified layers of the shell (at protein level).

It localises to the secreted. This is an uncharacterized protein from Lottia gigantea (Giant owl limpet).